We begin with the raw amino-acid sequence, 757 residues long: LPS-assembly protein LptD (757 aa).

An N-terminal signal peptide occupies residues 1 to 21 (MRRLIPIAITGSLLWGAAVQA).

Belongs to the LptD family. Component of the lipopolysaccharide transport and assembly complex. Interacts with LptE and LptA.

The protein localises to the cell outer membrane. Together with LptE, is involved in the assembly of lipopolysaccharide (LPS) at the surface of the outer membrane. This is LPS-assembly protein LptD from Alkalilimnicola ehrlichii (strain ATCC BAA-1101 / DSM 17681 / MLHE-1).